The sequence spans 465 residues: Poly(A) polymerase I (465 aa).

Residues Asp-80, Asp-82, and Asp-162 contribute to the active site. The disordered stretch occupies residues 429-465 (SAPPDQKGMLNELDEEPSPRRRTRRPRKRAPRREGTA). The span at 448 to 459 (RRRTRRPRKRAP) shows a compositional bias: basic residues.

This sequence belongs to the tRNA nucleotidyltransferase/poly(A) polymerase family.

The catalysed reaction is RNA(n) + ATP = RNA(n)-3'-adenine ribonucleotide + diphosphate. Adds poly(A) tail to the 3' end of many RNAs, which usually targets these RNAs for decay. Plays a significant role in the global control of gene expression, through influencing the rate of transcript degradation, and in the general RNA quality control. In Escherichia coli O157:H7, this protein is Poly(A) polymerase I.